Reading from the N-terminus, the 251-residue chain is Small ribosomal subunit protein uS2 (251 aa).

The protein belongs to the universal ribosomal protein uS2 family.

The polypeptide is Small ribosomal subunit protein uS2 (Aromatoleum aromaticum (strain DSM 19018 / LMG 30748 / EbN1) (Azoarcus sp. (strain EbN1))).